A 1064-amino-acid polypeptide reads, in one-letter code: Carbamoyl phosphate synthase large chain (1064 aa).

The carboxyphosphate synthetic domain stretch occupies residues 1-401; sequence MPKRADIKKI…ALMKAIRSLE (401 aa). ATP contacts are provided by Arg-129, Arg-169, Gly-175, Gly-176, Lys-208, Ile-210, Glu-215, Gly-241, Ile-242, His-243, Gln-284, and Glu-298. The 195-residue stretch at 133–327 folds into the ATP-grasp 1 domain; it reads KQLMEALKEP…IAKMAAKIAI (195 aa). Mg(2+) is bound by residues Gln-284, Glu-298, and Asn-300. Positions 284, 298, and 300 each coordinate Mn(2+). Residues 402–546 are oligomerization domain; the sequence is IGTFALDDLT…YSTYELENES (145 aa). The carbamoyl phosphate synthetic domain stretch occupies residues 547–929; it reads LKEKRPSVLV…ALYKAFVAAG (383 aa). One can recognise an ATP-grasp 2 domain in the interval 671 to 861; sequence NQVIKKLDLS…LAQLATRVML (191 aa). Residues Arg-707, Ser-746, Leu-748, Glu-752, Gly-777, Val-778, His-779, Ser-780, Gln-820, and Glu-832 each contribute to the ATP site. 3 residues coordinate Mg(2+): Gln-820, Glu-832, and Asn-834. The Mn(2+) site is built by Gln-820, Glu-832, and Asn-834. The MGS-like domain maps to 930–1064; the sequence is FKVHEHGNVL…VSAINKGDKS (135 aa). The interval 930-1064 is allosteric domain; it reads FKVHEHGNVL…VSAINKGDKS (135 aa).

This sequence belongs to the CarB family. In terms of assembly, composed of two chains; the small (or glutamine) chain promotes the hydrolysis of glutamine to ammonia, which is used by the large (or ammonia) chain to synthesize carbamoyl phosphate. Tetramer of heterodimers (alpha,beta)4. Mg(2+) is required as a cofactor. It depends on Mn(2+) as a cofactor.

It catalyses the reaction hydrogencarbonate + L-glutamine + 2 ATP + H2O = carbamoyl phosphate + L-glutamate + 2 ADP + phosphate + 2 H(+). The enzyme catalyses hydrogencarbonate + NH4(+) + 2 ATP = carbamoyl phosphate + 2 ADP + phosphate + 2 H(+). It participates in amino-acid biosynthesis; L-arginine biosynthesis; carbamoyl phosphate from bicarbonate: step 1/1. Its pathway is pyrimidine metabolism; UMP biosynthesis via de novo pathway; (S)-dihydroorotate from bicarbonate: step 1/3. Functionally, large subunit of the glutamine-dependent carbamoyl phosphate synthetase (CPSase). CPSase catalyzes the formation of carbamoyl phosphate from the ammonia moiety of glutamine, carbonate, and phosphate donated by ATP, constituting the first step of 2 biosynthetic pathways, one leading to arginine and/or urea and the other to pyrimidine nucleotides. The large subunit (synthetase) binds the substrates ammonia (free or transferred from glutamine from the small subunit), hydrogencarbonate and ATP and carries out an ATP-coupled ligase reaction, activating hydrogencarbonate by forming carboxy phosphate which reacts with ammonia to form carbamoyl phosphate. This Oenococcus oeni (strain ATCC BAA-331 / PSU-1) protein is Carbamoyl phosphate synthase large chain.